Here is a 328-residue protein sequence, read N- to C-terminus: Beta-ketoacyl-[acyl-carrier-protein] synthase III (328 aa).

Residues C122 and H255 contribute to the active site. The segment at 256–260 (QANIR) is ACP-binding. Residue N285 is part of the active site.

Belongs to the thiolase-like superfamily. FabH family. Homodimer.

The protein localises to the cytoplasm. The enzyme catalyses malonyl-[ACP] + acetyl-CoA + H(+) = 3-oxobutanoyl-[ACP] + CO2 + CoA. The protein operates within lipid metabolism; fatty acid biosynthesis. Catalyzes the condensation reaction of fatty acid synthesis by the addition to an acyl acceptor of two carbons from malonyl-ACP. Catalyzes the first condensation reaction which initiates fatty acid synthesis and may therefore play a role in governing the total rate of fatty acid production. Possesses both acetoacetyl-ACP synthase and acetyl transacylase activities. Its substrate specificity determines the biosynthesis of branched-chain and/or straight-chain of fatty acids. This chain is Beta-ketoacyl-[acyl-carrier-protein] synthase III, found in Polynucleobacter necessarius subsp. necessarius (strain STIR1).